The following is a 495-amino-acid chain: UDP-glycosyltransferase 73C12 (495 aa).

H24 acts as the Proton acceptor in catalysis. Residue H24 participates in an anthocyanidin binding. D129 functions as the Charge relay in the catalytic mechanism. UDP-alpha-D-glucose-binding residues include A356, Q358, H373, W376, N377, S378, and E381. A396 serves as a coordination point for an anthocyanidin. UDP-alpha-D-glucose contacts are provided by D397 and Q398.

Belongs to the UDP-glycosyltransferase family.

It catalyses the reaction oleanolate + UDP-alpha-D-glucose = oleanolate 3-O-beta-D-glucoside + UDP + H(+). Functionally, catalyzes the transfer of a glucose (Glc) moiety from UDP-Glc to the C-3 position of the oleanane sapogenins oleanolate and hederagenin, and to the C-28 carboxylic group of the lupane sapogenin betulinate. The monoglucosylated hederagenin 3-O-beta-D-glucoside is a feeding deterrent of the yellow-striped flea beetle (Phyllotreta nemorum). This is UDP-glycosyltransferase 73C12 from Barbarea vulgaris (Yellow rocket).